The primary structure comprises 67 residues: MKLTCVLIVAVLILTACQVIAADEAEATNRAIKRGWFGEESSCWWCTGFNKCCEAAAVCQSVNSACP.

Positions 1–22 are cleaved as a signal peptide; that stretch reads MKLTCVLIVAVLILTACQVIAA. 3 disulfides stabilise this stretch: cysteine 43-cysteine 53, cysteine 46-cysteine 59, and cysteine 52-cysteine 66.

The protein belongs to the conotoxin O1 superfamily. Expressed by the venom duct.

It is found in the secreted. In terms of biological role, probable neurotoxin. The chain is Conotoxin Cal6.35 from Californiconus californicus (California cone).